Reading from the N-terminus, the 4060-residue chain is Replicase polyprotein 1a (4060 aa).

In terms of domain architecture, CoV Nsp1 globular spans 2 to 109; it reads FYNQVTLAVA…DFDVVFGHGA (108 aa). The CoV Nsp2 N-terminal domain maps to 112–358; the sequence is VVFVDKYMCG…NTLLSNQLRL (247 aa). Positions 245, 247, 264, and 265 each coordinate Zn(2+). Residues 245–265 are C4; the sequence is CNCGSESWSVGAWDGYLSSCC. A CoV Nsp2 middle domain is found at 388 to 778; that stretch reads YDDILTNNKP…LDVYNGFLET (391 aa). In terms of domain architecture, CoV Nsp2 C-terminal spans 776-898; the sequence is LETVCSVAYT…LPVAFTKLAG (123 aa). The Ubiquitin-like 1 domain maps to 899–994; that stretch reads GKISFSDDVI…VMISQWPISN (96 aa). One can recognise a Peptidase C16 1 domain in the interval 1021 to 1262; sequence EVDIIEQPFE…EAGEVKPFAV (242 aa). C1062 functions as the For PL1-PRO activity in the catalytic mechanism. Positions 1134, 1136, 1163, and 1165 each coordinate Zn(2+). A C4-type 1 zinc finger spans residues 1134–1165; sequence CDCGKKFDDQVGCLFWIMPYTKLFQKGECCIC. Active-site for PL1-PRO activity residues include H1212 and D1225. The region spanning 1263–1421 is the Macro domain; that stretch reads YKNVKFYLGD…AVLKFLDGLD (159 aa). The Ubiquitin-like 2 domain maps to 1579–1633; sequence NDNVVLKITEDGINVKDVVVESSKSLGKQLGVVSDGVDSFEGVLPINTDTVLSVA. One can recognise a Peptidase C16 2 domain in the interval 1640–1886; that stretch reads AFYGFEKAAL…VPTIVSEKIS (247 aa). C1678 serves as the catalytic For PL2-PRO activity. Positions 1757, 1760, 1786, and 1788 each coordinate Zn(2+). A C4-type 2; atypical zinc finger spans residues 1757–1788; sequence CDICKSTVVEVKSAIVCASVLKDGCDVGFCPH. Residues H1836 and D1841 each act as for PL2-PRO activity in the active site. Transmembrane regions (helical) follow at residues 1903–1923 and 1968–1988; these read DFVM…FSLL and IVTL…VFMI. The tract at residues 1903 to 2131 is HD1; the sequence is DFVMNNIVLF…LFVRHIIVGC (229 aa). Positions 1983-2048 constitute a 3Ecto domain; it reads ALVFMIVQFS…TSLVWKHIRD (66 aa). Intrachain disulfides connect C1999–C2026 and C2017–C2023. 3 consecutive transmembrane segments (helical) span residues 2050–2070, 2073–2093, and 2111–2131; these read ILIS…GNMY, FGLL…LGFH, and FLAT…IVGC. Positions 2122–2212 are Y1; sequence LFVRHIIVGC…VVKTAVQPTA (91 aa). A CoV Nsp3 Y domain is found at 2122–2461; sequence LFVRHIIVGC…PATSIVAKQG (340 aa). Residues H2126, C2131, C2136, C2139, C2172, H2175, C2179, and C2182 each contribute to the Zn(2+) site. A ZF1 region spans residues 2126–2139; that stretch reads HIIVGCNNADCVAC. Residues 2172–2182 form a ZF2 region; it reads CNKHNFFCVNC. A Y2 region spans residues 2213-2302; that stretch reads PAYVIIDKVD…LVNSELLSTL (90 aa). The tract at residues 2213–2461 is coV-Y; it reads PAYVIIDKVD…PATSIVAKQG (249 aa). The interval 2303 to 2359 is Y3; that stretch reads SVDFNGVLHKAYVDVLCNSFFKELTANMSMAECKATLGLTVSDDDFVSAVANAHRYD. Residues 2360-2461 are Y4; the sequence is VLLSDLSFNN…PATSIVAKQG (102 aa). Transmembrane regions (helical) follow at residues 2468–2488, 2727–2747, 2752–2769, 2772–2792, and 2800–2820; these read YNFL…VSFI, GHML…FLVT, VFGD…ATLI, ISYV…LYFV, and AWIW…WWLL. Residues 2468–2820 are HD2; sequence YNFLWYVCLF…YFLLIPWWLL (353 aa). Residues 2844–2939 form the Nsp4C domain; the sequence is LFEGDKFIGT…PTISYNSTLQ (96 aa). A Peptidase C30 domain is found at 2940–3242; that stretch reads SGLKKMAQPS…VKQMYGVNLQ (303 aa). Catalysis depends on for 3CL-PRO activity residues H2980 and C3083. The next 7 helical transmembrane spans lie at 3254–3274, 3279–3299, 3303–3323, 3342–3362, 3376–3396, 3397–3417, and 3442–3462; these read FLFS…TNTI, VILT…TMFL, FLFL…YNCV, VLQM…VVFL, FTYV…GDFL, SLLV…AIVF, and LVVY…LYWF. The tract at residues 3254–3462 is HD3; the sequence is FLFSVFFTMF…CTYWGILYWF (209 aa). Residues 3522-3604 enclose the RdRp Nsp7 cofactor domain; the sequence is SKLTDLKCTN…SYFDNSSTLQ (83 aa). The RdRp Nsp8 cofactor domain occupies 3605–3799; that stretch reads SVASSFVSMP…LNCERVVKLQ (195 aa). The region spanning 3800-3908 is the Nsp9 ssRNA-binding domain; that stretch reads NNEIMPGKLK…GFIGATIRLQ (109 aa). Positions 3909 to 4047 constitute an ExoN/MTase coactivator domain; sequence AGKQTELAVN…DRTTIQSVDI (139 aa). Residues C3982, C3985, H3991, C3998, C4024, C4027, C4035, and C4037 each contribute to the Zn(2+) site. 2 zinc fingers span residues 3982–3998 and 4024–4037; these read CLYC…DGYC and CNVC…GCAC.

It belongs to the coronaviruses polyprotein 1ab family. 3CL-PRO exists as monomer and homodimer. Eight copies of nsp7 and eight copies of nsp8 assemble to form a heterohexadecamer. Nsp9 is a dimer. Nsp10 forms a dodecamer. Post-translationally, specific enzymatic cleavages in vivo by its own proteases yield mature proteins. 3CL-PRO and PL-PRO proteinases are autocatalytically processed.

It is found in the host membrane. The protein localises to the host cytoplasm. It localises to the host perinuclear region. It carries out the reaction Thiol-dependent hydrolysis of ester, thioester, amide, peptide and isopeptide bonds formed by the C-terminal Gly of ubiquitin (a 76-residue protein attached to proteins as an intracellular targeting signal).. Its function is as follows. The papain-like proteinase 1 (PLP1) and papain-like proteinase 2 (PLP2) are responsible for the cleavages located at the N-terminus of the replicase polyprotein. In addition, PLP2 possesses a deubiquitinating/deISGylating activity and processes both 'Lys-48'- and 'Lys-63'-linked polyubiquitin chains from cellular substrates. PLP2 also antagonizes innate immune induction of type I interferon by blocking the nuclear translocation of host IRF-3. Responsible for the majority of cleavages as it cleaves the C-terminus of replicase polyprotein at 11 sites. Recognizes substrates containing the core sequence [ILMVF]-Q-|-[SGACN]. Inhibited by the substrate-analog Cbz-Val-Asn-Ser-Thr-Leu-Gln-CMK. Also contains an ADP-ribose-1''-phosphate (ADRP)-binding function. In terms of biological role, nsp7-nsp8 hexadecamer may possibly confer processivity to the polymerase, maybe by binding to dsRNA or by producing primers utilized by the latter. Functionally, nsp9 is a ssRNA-binding protein. This chain is Replicase polyprotein 1a, found in Homo sapiens (Human).